Consider the following 117-residue polypeptide: Hainantoxin-XV-5 (117 aa).

The first 20 residues, 1-20 (MKLCAVIIASLLVCVAVASS), serve as a signal peptide directing secretion. The disordered stretch occupies residues 20–55 (SSDNQKEFAQEKEMTREETQSLGEHEKDDEVTGSEE). A propeptide spanning residues 21–56 (SDNQKEFAQEKEMTREETQSLGEHEKDDEVTGSEER) is cleaved from the precursor. Residues 23 to 55 (NQKEFAQEKEMTREETQSLGEHEKDDEVTGSEE) show a composition bias toward basic and acidic residues. 4 disulfide bridges follow: Cys-58-Cys-72, Cys-65-Cys-78, Cys-69-Cys-115, and Cys-71-Cys-91.

Belongs to the neurotoxin 03 (Tx2) family. 02 subfamily. HNTX-XV sub-subfamily. In terms of tissue distribution, expressed by the venom gland.

The protein localises to the secreted. Functionally, putative ion channel inhibitor. In Cyriopagopus hainanus (Chinese bird spider), this protein is Hainantoxin-XV-5.